A 191-amino-acid polypeptide reads, in one-letter code: MVGKRLWVTGYRAYELNVFGSNDPKLKVLKTSLKNTLMQFLDEGLEWLITGGQLGVEQWAVEVALGLKPLYPDFKIAMMVPFTDFGKQWNEDNQGQLAALRGQVDFSDAVSQAPYQQPAQLQGYTRFITIHTDAALLVYDPEFPGKAKWDYQAAEAMADRRDYPVQLITMDDLEETAQAMAEAENEHFQND.

It belongs to the UPF0398 family.

The sequence is that of UPF0398 protein LSEI_1479 from Lacticaseibacillus paracasei (strain ATCC 334 / BCRC 17002 / CCUG 31169 / CIP 107868 / KCTC 3260 / NRRL B-441) (Lactobacillus paracasei).